The chain runs to 253 residues: Chitooligosaccharide deacetylase (253 aa).

Residues H61 and H125 each contribute to the Mg(2+) site.

It belongs to the YdjC deacetylase family. ChbG subfamily. As to quaternary structure, homodimer. The cofactor is Mg(2+).

It is found in the cytoplasm. It catalyses the reaction N,N'-diacetylchitobiose + H2O = N-acetyl-beta-D-glucosaminyl-(1-&gt;4)-D-glucosamine + acetate. The catalysed reaction is diacetylchitobiose-6'-phosphate + H2O = N'-monoacetylchitobiose-6'-phosphate + acetate. It participates in glycan degradation; chitin degradation. Its function is as follows. Involved in the degradation of chitin. ChbG is essential for growth on the acetylated chitooligosaccharides chitobiose and chitotriose but is dispensable for growth on cellobiose and chitosan dimer, the deacetylated form of chitobiose. Deacetylation of chitobiose-6-P and chitotriose-6-P is necessary for both the activation of the chb promoter by the regulatory protein ChbR and the hydrolysis of phosphorylated beta-glucosides by the phospho-beta-glucosidase ChbF. Catalyzes the removal of only one acetyl group from chitobiose-6-P to yield monoacetylchitobiose-6-P, the inducer of ChbR and the substrate of ChbF. The chain is Chitooligosaccharide deacetylase from Proteus mirabilis (strain HI4320).